The following is a 377-amino-acid chain: Leukocyte elastase inhibitor (377 aa).

Met1 is subject to N-acetylmethionine. Lys136 is subject to N6-acetyllysine. Phosphoserine is present on Ser298. Residues 349–377 form a CARD-binding motif (CBM) region; that stretch reads EFVADHPFIFFIRHKPSSNILFLGRLSSP.

It belongs to the serpin family. Ov-serpin subfamily. Monomer. Interacts (via C-terminus) with CASP1; CASP4 (via CARD domain) and CASP5; these interactions regulate the activity of inflammatory caspases. Interacts with PRTN3. Interacts with GZMH.

It localises to the secreted. The protein resides in the cytoplasm. The protein localises to the cytolytic granule. Its subcellular location is the early endosome. Functionally, neutrophil serine protease inhibitor that plays an essential role in the regulation of the innate immune response, inflammation and cellular homeostasis. Acts primarily to protect the cell from proteases released in the cytoplasm during stress or infection. These proteases are important in killing microbes but when released from granules, these potent enzymes also destroy host proteins and contribute to mortality. Regulates the activity of the neutrophil proteases elastase, cathepsin G, proteinase-3, chymase, chymotrypsin, and kallikrein-3. Also acts as a potent intracellular inhibitor of GZMH by directly blocking its proteolytic activity. During inflammation, limits the activity of inflammatory caspases CASP1, CASP4 and CASP5 by suppressing their caspase-recruitment domain (CARD) oligomerization and enzymatic activation. When secreted, promotes the proliferation of beta-cells via its protease inhibitory function. The protein is Leukocyte elastase inhibitor (SERPINB1) of Bos taurus (Bovine).